The following is a 523-amino-acid chain: Sucrose 6(F)-phosphate phosphorylase (523 aa).

Sucrose 6(F)-phosphate contacts are provided by residues Asp-58, His-96, 221–223 (RLD), Glu-264, 326–327 (HD), and Lys-434. Asp-223 acts as the Nucleophile in catalysis. Glu-264 functions as the Proton donor/acceptor in the catalytic mechanism.

The protein belongs to the glycosyl hydrolase 13 family. Sucrose phosphorylase subfamily. Monomer.

It carries out the reaction sucrose 6(F)-phosphate + phosphate = beta-D-fructose 6-phosphate + alpha-D-glucose 1-phosphate. Its function is as follows. Catalyzes the reversible phosphorolysis of sucrose 6(F)-phosphate into alpha-D-glucose 1-phosphate (Glc1P) and D-fructose 6-phosphate. May be involved in a new pathway for the degradation of sucrose, which could become phosphorylated on its fructose moiety during uptake via a PTS system. Shows strict specificity since it does not catalyze reactions with alternative substrates. This chain is Sucrose 6(F)-phosphate phosphorylase, found in Ilumatobacter coccineus (strain NBRC 103263 / KCTC 29153 / YM16-304).